The following is a 267-amino-acid chain: Phosphate import ATP-binding protein PstB (267 aa).

An ABC transporter domain is found at 21–262 (VAARNLDFYY…PSKQQTEDYI (242 aa)). 53–60 (GPSGCGKS) contributes to the ATP binding site.

The protein belongs to the ABC transporter superfamily. Phosphate importer (TC 3.A.1.7) family. The complex is composed of two ATP-binding proteins (PstB), two transmembrane proteins (PstC and PstA) and a solute-binding protein (PstS).

The protein localises to the cell inner membrane. It carries out the reaction phosphate(out) + ATP + H2O = ADP + 2 phosphate(in) + H(+). In terms of biological role, part of the ABC transporter complex PstSACB involved in phosphate import. Responsible for energy coupling to the transport system. The polypeptide is Phosphate import ATP-binding protein PstB (Xanthomonas oryzae pv. oryzae (strain MAFF 311018)).